Consider the following 135-residue polypeptide: Transcription antitermination protein NusB (135 aa).

The protein belongs to the NusB family.

Functionally, involved in transcription antitermination. Required for transcription of ribosomal RNA (rRNA) genes. Binds specifically to the boxA antiterminator sequence of the ribosomal RNA (rrn) operons. This Shewanella halifaxensis (strain HAW-EB4) protein is Transcription antitermination protein NusB.